Consider the following 329-residue polypeptide: Phenylalanine--tRNA ligase alpha subunit (329 aa).

This sequence belongs to the class-II aminoacyl-tRNA synthetase family. Phe-tRNA synthetase alpha subunit type 1 subfamily. Tetramer of two alpha and two beta subunits. Mg(2+) is required as a cofactor.

The protein localises to the cytoplasm. The enzyme catalyses tRNA(Phe) + L-phenylalanine + ATP = L-phenylalanyl-tRNA(Phe) + AMP + diphosphate + H(+). The protein is Phenylalanine--tRNA ligase alpha subunit (pheS) of Buchnera aphidicola subsp. Acyrthosiphon pisum (strain APS) (Acyrthosiphon pisum symbiotic bacterium).